The sequence spans 428 residues: Glutamyl-tRNA reductase (428 aa).

Substrate-binding positions include 49-52 (TCNR), Ser-109, 114-116 (EGQ), and Gln-120. Cys-50 acts as the Nucleophile in catalysis. An NADP(+)-binding site is contributed by 189 to 194 (GAGKMS).

Belongs to the glutamyl-tRNA reductase family. As to quaternary structure, homodimer.

It carries out the reaction (S)-4-amino-5-oxopentanoate + tRNA(Glu) + NADP(+) = L-glutamyl-tRNA(Glu) + NADPH + H(+). Its pathway is porphyrin-containing compound metabolism; protoporphyrin-IX biosynthesis; 5-aminolevulinate from L-glutamyl-tRNA(Glu): step 1/2. It functions in the pathway porphyrin-containing compound metabolism; chlorophyll biosynthesis. Its function is as follows. Catalyzes the NADPH-dependent reduction of glutamyl-tRNA(Glu) to glutamate 1-semialdehyde (GSA). The polypeptide is Glutamyl-tRNA reductase (Gloeothece citriformis (strain PCC 7424) (Cyanothece sp. (strain PCC 7424))).